The following is a 162-amino-acid chain: Type IV major fimbrial protein FimA (162 aa).

Residues 1 to 7 constitute a propeptide, leader sequence; it reads MKSLQKG. An N-methylphenylalanine modification is found at Phe8. Residues 8–28 traverse the membrane as a helical segment; sequence FTLIELMIVVAIIGILAAFAI. Residues Cys63 and Cys106 are joined by a disulfide bond.

The protein belongs to the N-Me-Phe pilin family.

It is found in the fimbrium. It localises to the membrane. Major component of the type IV fimbriae that plays an essential role in twitching motility, natural transformation, and protease secretion. This is Type IV major fimbrial protein FimA (fimA) from Dichelobacter nodosus (strain VCS1703A).